Here is a 435-residue protein sequence, read N- to C-terminus: F-box/FBD/LRR-repeat protein At5g44980 (435 aa).

The 47-residue stretch at 3-49 (RDYISELPDSLLTQILLELRTKDSVKTSVLSKRWRNLWLNVPGLELF) folds into the F-box domain. LRR repeat units lie at residues 88-114 (CKGY…YVFM), 138-162 (LHNV…KLEN), 165-190 (HGED…ELIR), 191-217 (PFDI…TLHF), 250-275 (VKNL…DLRM), and 324-349 (MWSS…ILEY). The region spanning 355–405 (REQVDFTNVPQCLISTLEYVEIKEPNEKSTIKLVNYFLENSAVLKKLTLRF) is the FBD domain.

In Arabidopsis thaliana (Mouse-ear cress), this protein is F-box/FBD/LRR-repeat protein At5g44980.